Here is a 465-residue protein sequence, read N- to C-terminus: Serine/threonine-protein kinase 38 (465 aa).

Ala2 is subject to N-acetylalanine. The interval Lys62–Glu87 is interaction with S100B. Position 74 is a phosphothreonine (Thr74). Residues Phe89 to Phe382 enclose the Protein kinase domain. Residues Ile95–Val103 and Lys118 contribute to the ATP site. The active-site Proton acceptor is Asp212. Ser264 bears the Phosphoserine mark. At Ser281 the chain carries Phosphoserine; by autocatalysis. The UFM1-interacting motif (UFIM) signature appears at Trp306–Ile311. An AGC-kinase C-terminal domain is found at Glu383–Gly455. The residue at position 444 (Thr444) is a Phosphothreonine; by STK24/MST3.

Belongs to the protein kinase superfamily. AGC Ser/Thr protein kinase family. In terms of assembly, homodimeric S100B binds two molecules of STK38. Interacts with MOB1 and MOB2. Interacts with MAP3K1 and MAP3K2 (via the kinase domain). Forms a tripartite complex with MOBKL1B and STK3/MST2. Interacts with MICAL1; leading to inhibit the protein kinase activity by antagonizing activation by MST1/STK4. It depends on Mg(2+) as a cofactor. Post-translationally, ISGylated. In terms of processing, phosphorylated by STK3/MST2 and this is enhanced by MOBKL1B.

The protein localises to the nucleus. The protein resides in the cytoplasm. It is found in the chromosome. The catalysed reaction is L-seryl-[protein] + ATP = O-phospho-L-seryl-[protein] + ADP + H(+). It catalyses the reaction L-threonyl-[protein] + ATP = O-phospho-L-threonyl-[protein] + ADP + H(+). Activated by binding of S100B which releases autoinhibitory N-lobe interactions, enabling ATP to bind and the autophosphorylation of Ser-281. Thr-444 then undergoes calcium-dependent phosphorylation by STK24/MST3. Interactions between phosphorylated Thr-444 and the N-lobe promote additional structural changes that complete the activation of the kinase. Autoinhibition is also released by the binding of MOB1/MOBKL1A and MOB2/HCCA2 to the N-terminal of STK38. Its function is as follows. Serine/threonine-protein kinase that acts as a negative regulator of MAP3K1/2 signaling. Converts MAP3K2 from its phosphorylated form to its non-phosphorylated form and inhibits autophosphorylation of MAP3K2. Acts as an ufmylation 'reader' in a kinase-independent manner: specifically recognizes and binds mono-ufmylated histone H4 in response to DNA damage, promoting the recruitment of SUV39H1 to the double-strand breaks, resulting in ATM activation. This chain is Serine/threonine-protein kinase 38 (STK38), found in Bos taurus (Bovine).